A 496-amino-acid polypeptide reads, in one-letter code: Lysine--tRNA ligase (496 aa).

Mg(2+) is bound by residues Glu403 and Glu410.

This sequence belongs to the class-II aminoacyl-tRNA synthetase family. As to quaternary structure, homodimer. It depends on Mg(2+) as a cofactor.

The protein resides in the cytoplasm. The catalysed reaction is tRNA(Lys) + L-lysine + ATP = L-lysyl-tRNA(Lys) + AMP + diphosphate. This Aster yellows witches'-broom phytoplasma (strain AYWB) protein is Lysine--tRNA ligase.